A 656-amino-acid polypeptide reads, in one-letter code: FAST kinase domain-containing protein 3, mitochondrial (656 aa).

One can recognise an RAP domain in the interval 587–645; the sequence is VALCIDGPQRFCLGSKHLLGKEAIKQRHLRLLGYQVVQVPYHELELLTSRLELVDYLQR.

This sequence belongs to the FAST kinase family.

It is found in the mitochondrion. In terms of biological role, required for normal mitochondrial respiration. Increases steady-state levels and half-lives of a subset of mature mitochondrial mRNAs MT-ND2, MT-ND3, MT-CYTB, MT-CO2, and MT-ATP8/6. Promotes MT-CO1 mRNA translation and increases mitochondrial complex IV assembly and activity. The polypeptide is FAST kinase domain-containing protein 3, mitochondrial (Fastkd3) (Rattus norvegicus (Rat)).